Consider the following 540-residue polypeptide: Phosphoenolpyruvate carboxykinase (ATP) (540 aa).

Arginine 65 lines the substrate pocket. Lysine 87 is modified (N6-acetyllysine). The substrate site is built by tyrosine 207 and lysine 213. Residues lysine 213, histidine 232, and 248-256 (GLSGTGKTT) each bind ATP. Lysine 213 and histidine 232 together coordinate Mn(2+). Aspartate 269 contacts Mn(2+). Residues glutamate 297, arginine 333, 449 to 450 (RI), and threonine 455 each bind ATP. Arginine 333 serves as a coordination point for substrate. The residue at position 523 (lysine 523) is an N6-acetyllysine.

It belongs to the phosphoenolpyruvate carboxykinase (ATP) family. As to quaternary structure, monomer. The cofactor is Mn(2+).

It localises to the cytoplasm. The catalysed reaction is oxaloacetate + ATP = phosphoenolpyruvate + ADP + CO2. Its pathway is carbohydrate biosynthesis; gluconeogenesis. Involved in the gluconeogenesis. Catalyzes the conversion of oxaloacetate (OAA) to phosphoenolpyruvate (PEP) through direct phosphoryl transfer between the nucleoside triphosphate and OAA. In Shigella flexneri serotype 5b (strain 8401), this protein is Phosphoenolpyruvate carboxykinase (ATP).